The primary structure comprises 586 residues: Pyruvate kinase (586 aa).

Residue Arg-32 participates in substrate binding. Residues Asn-34, Ser-36, Asp-66, and Thr-67 each coordinate K(+). 34 to 37 (NFSH) is a binding site for ATP. Arg-73 and Lys-156 together coordinate ATP. Glu-222 is a Mg(2+) binding site. Residues Gly-245, Asp-246, and Thr-278 each coordinate substrate. A Mg(2+)-binding site is contributed by Asp-246.

The protein belongs to the pyruvate kinase family. In the C-terminal section; belongs to the PEP-utilizing enzyme family. Mg(2+) serves as cofactor. It depends on K(+) as a cofactor.

It carries out the reaction pyruvate + ATP = phosphoenolpyruvate + ADP + H(+). The protein operates within carbohydrate degradation; glycolysis; pyruvate from D-glyceraldehyde 3-phosphate: step 5/5. In Staphylococcus haemolyticus (strain JCSC1435), this protein is Pyruvate kinase (pyk).